The chain runs to 260 residues: Snake venom serine protease Dav-X (260 aa).

A signal peptide spans 1–18 (MVLIRVLANLLILQLSYA). Positions 19 to 24 (QKSSEL) are excised as a propeptide. One can recognise a Peptidase S1 domain in the interval 25–251 (VIGGVECDIN…YTDWIQNIIA (227 aa)). 6 cysteine pairs are disulfide-bonded: Cys31-Cys165, Cys52-Cys68, Cys102-Cys258, Cys144-Cys212, Cys176-Cys191, and Cys202-Cys227. The active-site Charge relay system is His67. N-linked (GlcNAc...) asparagine glycosylation is present at Asn81. Asp112 functions as the Charge relay system in the catalytic mechanism. Residues Asn124 and Asn172 are each glycosylated (N-linked (GlcNAc...) asparagine). Ser206 serves as the catalytic Charge relay system. Residue Asn241 is glycosylated (N-linked (GlcNAc...) asparagine).

It belongs to the peptidase S1 family. Snake venom subfamily. As to quaternary structure, monomer. As to expression, expressed by the venom gland.

It localises to the secreted. Snake venom serine protease that may act in the hemostasis system of the prey. The protein is Snake venom serine protease Dav-X of Deinagkistrodon acutus (Hundred-pace snake).